Reading from the N-terminus, the 558-residue chain is Glucose-6-phosphate isomerase (558 aa).

Residue alanine 2 is modified to N-acetylalanine. Residue lysine 12 is modified to N6-acetyllysine. The residue at position 34 (lysine 34) is an N6-(2-hydroxyisobutyryl)lysine. Serine 107 carries the phosphoserine modification. At threonine 109 the chain carries Phosphothreonine. Lysine 142 is modified (N6-acetyllysine). D-glucose 6-phosphate is bound at residue 159–160; it reads GS. At serine 185 the chain carries Phosphoserine; by CK2. 210 to 215 provides a ligand contact to D-glucose 6-phosphate; sequence SKTFTT. Phosphothreonine is present on threonine 250. Glutamine 354, glutamate 358, and histidine 389 together coordinate D-glucose 6-phosphate. Glutamate 358 (proton donor) is an active-site residue. Histidine 389 is a catalytic residue. Position 454 is an N6-acetyllysine; alternate (lysine 454). Lysine 454 is subject to N6-malonyllysine; alternate. Residue lysine 454 is modified to N6-succinyllysine; alternate. Serine 455 is modified (phosphoserine). Lysine 519 is a D-glucose 6-phosphate binding site. Residue lysine 519 is part of the active site.

This sequence belongs to the GPI family. In terms of assembly, homodimer; in the catalytically active form. Monomer in the secreted form. Post-translationally, phosphorylation at Ser-185 by CK2 has been shown to decrease enzymatic activity and may contribute to secretion by a non-classical secretory pathway. In terms of processing, ISGylated.

Its subcellular location is the cytoplasm. It localises to the secreted. The enzyme catalyses alpha-D-glucose 6-phosphate = beta-D-fructose 6-phosphate. The protein operates within carbohydrate degradation; glycolysis; D-glyceraldehyde 3-phosphate and glycerone phosphate from D-glucose: step 2/4. Its function is as follows. In the cytoplasm, catalyzes the conversion of glucose-6-phosphate to fructose-6-phosphate, the second step in glycolysis, and the reverse reaction during gluconeogenesis. Besides it's role as a glycolytic enzyme, also acts as a secreted cytokine: acts as an angiogenic factor (AMF) that stimulates endothelial cell motility. Acts as a neurotrophic factor, neuroleukin, for spinal and sensory neurons. It is secreted by lectin-stimulated T-cells and induces immunoglobulin secretion. This chain is Glucose-6-phosphate isomerase, found in Pongo abelii (Sumatran orangutan).